Reading from the N-terminus, the 341-residue chain is Phenylalanine--tRNA ligase alpha subunit (341 aa).

Glu254 contributes to the Mg(2+) binding site.

Belongs to the class-II aminoacyl-tRNA synthetase family. Phe-tRNA synthetase alpha subunit type 1 subfamily. As to quaternary structure, tetramer of two alpha and two beta subunits. Mg(2+) serves as cofactor.

The protein resides in the cytoplasm. The catalysed reaction is tRNA(Phe) + L-phenylalanine + ATP = L-phenylalanyl-tRNA(Phe) + AMP + diphosphate + H(+). In Mycoplasma pneumoniae (strain ATCC 29342 / M129 / Subtype 1) (Mycoplasmoides pneumoniae), this protein is Phenylalanine--tRNA ligase alpha subunit (pheS).